An 84-amino-acid chain; its full sequence is U21-theraphotoxin-Cg1b (84 aa).

The signal sequence occupies residues 1 to 21 (MKVSVLITLAVLGVMFLLTSA). A propeptide spanning residues 22-47 (EERGSDQMDSPAWLKSMERIFQSEER) is cleaved from the precursor. Cystine bridges form between Cys-49/Cys-63, Cys-56/Cys-68, and Cys-62/Cys-76. Phe-82 bears the Phenylalanine amide mark.

Belongs to the neurotoxin 10 (Hwtx-1) family. 05 (F4a) subfamily. In terms of tissue distribution, expressed by the venom gland.

Its subcellular location is the secreted. Functionally, probable ion channel inhibitor. This Chilobrachys guangxiensis (Chinese earth tiger tarantula) protein is U21-theraphotoxin-Cg1b.